The chain runs to 266 residues: GFP-like fluorescent chromoprotein cFP484 (266 aa).

The segment at residues 104–106 (QYG) is a cross-link (2-iminomethyl-5-imidazolinone (Gln-Gly)). Position 105 is a 2,3-didehydrotyrosine (Tyr105).

Belongs to the GFP family. Post-translationally, contains a chromophore consisting of modified amino acid residues. The chromophore is formed by autocatalytic backbone condensation between Xaa-N and Gly-(N+2), oxidation of Tyr-(N+1) to didehydrotyrosine, and formation of a double bond to the alpha-amino nitrogen of residue Xaa-N. Maturation of the chromophore requires nothing other than molecular oxygen. The precise stereochemistry of the tyrosine has not been determined. Tentacle and oral disk.

Functionally, pigment protein that is green in color. The protein is GFP-like fluorescent chromoprotein cFP484 of Clavularia sp. (Brown star polyp).